Here is a 236-residue protein sequence, read N- to C-terminus: MALDNKFVAKGLRLYSARSVANRTKTFVAKKNKVVAPKKVVAPVTPVEKTFGKGKRVIAAKASKFAPSIPAEIRSTAAKKVQQKVALRKSITPGTVLIILAGRFAGKRVVALKQLDSGLILITGPFKVNGVPLRRIDQRYVIATSTKIDVSSVKVAATINDAYFAAEKKSTTKSEGAFFSDEKKAEKKKIADSRVADQKSVDSAILAVLKKEKFLTVYLKTKFYLKKGEFPHQLKF.

It belongs to the eukaryotic ribosomal protein eL6 family.

This chain is Large ribosomal subunit protein eL6 (rpl6), found in Dictyostelium discoideum (Social amoeba).